The following is a 157-amino-acid chain: Glutaredoxin-2, mitochondrial (157 aa).

The transit peptide at 1 to 18 directs the protein to the mitochondrion; that stretch reads MYWRRAALVGTRLIPVRS. Ser20 bears the Phosphoserine mark. The 101-residue stretch at 51 to 151 folds into the Glutaredoxin domain; sequence VNQIQETISN…PLVHQCHLKN (101 aa). Residue Cys62 coordinates [2Fe-2S] cluster. Lys68 contacts glutathione. Cys71 carries the post-translational modification S-glutathionyl cysteine; alternate. The cysteines at positions 71 and 74 are disulfide-linked. Positions 103 and 115 each coordinate glutathione. Cys147 provides a ligand contact to [2Fe-2S] cluster.

Belongs to the glutaredoxin family. Monomer; active form. Homodimer; inactive form. The homodimer is probably linked by 1 2Fe-2S cluster.

The protein localises to the mitochondrion. The 2Fe-2S present in the homodimer leads to inactivation of the enzyme. The 2Fe-2S may serve as a redox sensor: the presence of one-electron oxidants or reductants leading to the loss of the 2Fe-2S cluster, subsequent monomerization and activation of the enzyme. In terms of biological role, glutathione-dependent oxidoreductase that facilitates the maintenance of mitochondrial redox homeostasis upon induction of apoptosis by oxidative stress. Involved in response to hydrogen peroxide and regulation of apoptosis caused by oxidative stress. Acts as a very efficient catalyst of monothiol reactions because of its high affinity for protein glutathione-mixed disulfides. Can receive electrons not only from glutathione (GSH), but also from thioredoxin reductase supporting both monothiol and dithiol reactions. Efficiently catalyzes both glutathionylation and deglutathionylation of mitochondrial complex I, which in turn regulates the superoxide production by the complex. Overexpression decreases the susceptibility to apoptosis and prevents loss of cardiolipin and cytochrome c release. The sequence is that of Glutaredoxin-2, mitochondrial (GLRX2) from Bos taurus (Bovine).